The chain runs to 150 residues: NADH-quinone oxidoreductase subunit A (150 aa).

A run of 3 helical transmembrane segments spans residues 14–34 (WAFA…LLGA), 70–90 (LVAM…AWAV), and 98–118 (LGFI…FYLV).

The protein belongs to the complex I subunit 3 family. NDH-1 is composed of 13 different subunits. Subunits NuoA, H, J, K, L, M, N constitute the membrane sector of the complex.

It localises to the cell inner membrane. It catalyses the reaction a quinone + NADH + 5 H(+)(in) = a quinol + NAD(+) + 4 H(+)(out). NDH-1 shuttles electrons from NADH, via FMN and iron-sulfur (Fe-S) centers, to quinones in the respiratory chain. The immediate electron acceptor for the enzyme in this species is believed to be ubiquinone. Couples the redox reaction to proton translocation (for every two electrons transferred, four hydrogen ions are translocated across the cytoplasmic membrane), and thus conserves the redox energy in a proton gradient. This is NADH-quinone oxidoreductase subunit A from Proteus mirabilis (strain HI4320).